The chain runs to 283 residues: Pantothenate synthetase (283 aa).

Residue 34 to 41 participates in ATP binding; sequence MGALHDGH. The Proton donor role is filled by His41. Gln65 serves as a coordination point for (R)-pantoate. Position 65 (Gln65) interacts with beta-alanine. Residue 152–155 coordinates ATP; sequence GSKD. Gln158 lines the (R)-pantoate pocket. ATP contacts are provided by residues Val181 and 189–192; that span reads MSSR.

The protein belongs to the pantothenate synthetase family. In terms of assembly, homodimer.

Its subcellular location is the cytoplasm. It catalyses the reaction (R)-pantoate + beta-alanine + ATP = (R)-pantothenate + AMP + diphosphate + H(+). It participates in cofactor biosynthesis; (R)-pantothenate biosynthesis; (R)-pantothenate from (R)-pantoate and beta-alanine: step 1/1. Its function is as follows. Catalyzes the condensation of pantoate with beta-alanine in an ATP-dependent reaction via a pantoyl-adenylate intermediate. The chain is Pantothenate synthetase from Rhodopseudomonas palustris (strain ATCC BAA-98 / CGA009).